Reading from the N-terminus, the 197-residue chain is Holliday junction branch migration complex subunit RuvA (197 aa).

The domain I stretch occupies residues 1 to 64 (MIGRLSGKLI…EDAHLLYGFA (64 aa)). Positions 65 to 143 (SKEERQTFRQ…TGGNLTVPGG (79 aa)) are domain II. A flexible linker region spans residues 143-147 (GLPFA). The domain III stretch occupies residues 148–197 (ATPDEKSDIVNALLALGYNEKEAAAATKSLPADVTVSEGVRLALKSLMKV).

This sequence belongs to the RuvA family. As to quaternary structure, homotetramer. Forms an RuvA(8)-RuvB(12)-Holliday junction (HJ) complex. HJ DNA is sandwiched between 2 RuvA tetramers; dsDNA enters through RuvA and exits via RuvB. An RuvB hexamer assembles on each DNA strand where it exits the tetramer. Each RuvB hexamer is contacted by two RuvA subunits (via domain III) on 2 adjacent RuvB subunits; this complex drives branch migration. In the full resolvosome a probable DNA-RuvA(4)-RuvB(12)-RuvC(2) complex forms which resolves the HJ.

The protein localises to the cytoplasm. In terms of biological role, the RuvA-RuvB-RuvC complex processes Holliday junction (HJ) DNA during genetic recombination and DNA repair, while the RuvA-RuvB complex plays an important role in the rescue of blocked DNA replication forks via replication fork reversal (RFR). RuvA specifically binds to HJ cruciform DNA, conferring on it an open structure. The RuvB hexamer acts as an ATP-dependent pump, pulling dsDNA into and through the RuvAB complex. HJ branch migration allows RuvC to scan DNA until it finds its consensus sequence, where it cleaves and resolves the cruciform DNA. This chain is Holliday junction branch migration complex subunit RuvA, found in Chromobacterium violaceum (strain ATCC 12472 / DSM 30191 / JCM 1249 / CCUG 213 / NBRC 12614 / NCIMB 9131 / NCTC 9757 / MK).